A 187-amino-acid chain; its full sequence is Photosystem I assembly protein Ycf4 (187 aa).

The next 2 helical transmembrane spans lie at 25–47 (YWWA…SSYL) and 62–84 (FVPQ…IYLW).

The protein belongs to the Ycf4 family.

Its subcellular location is the plastid. The protein localises to the chloroplast thylakoid membrane. In terms of biological role, seems to be required for the assembly of the photosystem I complex. In Mesostigma viride (Green alga), this protein is Photosystem I assembly protein Ycf4.